The primary structure comprises 680 residues: Methionine--tRNA ligase (680 aa).

The short motif at 15–25 (PYANGSIHLGH) is the 'HIGH' region element. Cysteine 146, cysteine 149, cysteine 159, and cysteine 162 together coordinate Zn(2+). A 'KMSKS' region motif is present at residues 332-336 (KMSKS). Lysine 335 is a binding site for ATP. Residues 579–680 (DFAKVDMRIA…EGAQPGMRVM (102 aa)) form the tRNA-binding domain.

This sequence belongs to the class-I aminoacyl-tRNA synthetase family. MetG type 1 subfamily. In terms of assembly, homodimer. It depends on Zn(2+) as a cofactor.

The protein resides in the cytoplasm. The enzyme catalyses tRNA(Met) + L-methionine + ATP = L-methionyl-tRNA(Met) + AMP + diphosphate. In terms of biological role, is required not only for elongation of protein synthesis but also for the initiation of all mRNA translation through initiator tRNA(fMet) aminoacylation. The polypeptide is Methionine--tRNA ligase (Photobacterium profundum (strain SS9)).